The primary structure comprises 134 residues: Thrombin inhibitor savignin (134 aa).

Residues 1–16 (MLFYVVITLVAGTVSG) form the signal peptide. The BPTI/Kunitz inhibitor 1 domain maps to 17 to 69 (LNVRCNNPHTANCENGAKLESYFREGETCVGSPACPGEGYATKEDCQKACFPG). Disulfide bonds link C21–C66, C29–C51, C45–C62, C81–C129, C89–C112, and C105–C125. The linker stretch occupies residues 70–82 (GGDHSTNVDSSCF). Residues 83 to 129 (GQPPTSCETGAEVTYYDSGSRTCKVLQHGCPSSENAFDSEIECQVAC) enclose the BPTI/Kunitz inhibitor domain.

Expressed in salivary glands.

Its subcellular location is the cytoplasmic vesicle. The protein localises to the secretory vesicle. It is found in the secreted. In terms of biological role, tick salivary thrombin inhibitor that plays an important part in the anti-hemostatic strategy of ticks. Inhibits thrombin-induced platelet aggregation, but has no effect on ADP- or collagen-induced aggregation. Is a competitive, slow-, tight-binding inhibitor of thrombin (Ki=4.89 pM). It requires thrombin fibrinogen-binding exosite for optimal inhibition, as its affinity for thrombin lacking the exosite is much lower (Ki=22.3 nM). Its N-terminal amino acid residues may bind inside the active site cleft of thrombin, while its C-terminal domain may interact with the basic fibrinogen recognition exosite of thrombin. It does not inhibit plasmin, factor Xa (F10), and trypsin. The polypeptide is Thrombin inhibitor savignin (Ornithodoros kalahariensis (Tick)).